Reading from the N-terminus, the 697-residue chain is Serotransferrin (697 aa).

Positions 1-19 (MRLTVGALLACAALGLCLA) are cleaved as a signal peptide. Transferrin-like domains follow at residues 25-347 (VKWC…NQQE) and 360-682 (VKWC…NMRK). 2 disulfides stabilise this stretch: cysteine 28–cysteine 67 and cysteine 38–cysteine 58. Arginine 42 carries the post-translational modification Dimethylated arginine. Fe(3+) is bound by residues aspartate 82 and tyrosine 114. 8 cysteine pairs are disulfide-bonded: cysteine 137–cysteine 213, cysteine 156–cysteine 350, cysteine 177–cysteine 193, cysteine 180–cysteine 196, cysteine 190–cysteine 198, cysteine 246–cysteine 260, cysteine 363–cysteine 395, and cysteine 373–cysteine 386. Threonine 139, arginine 143, alanine 145, and glycine 146 together coordinate hydrogencarbonate. Tyrosine 207 is a Fe(3+) binding site. Residue histidine 268 coordinates Fe(3+). A Phosphoserine modification is found at serine 388. Fe(3+) is bound by residues aspartate 410 and tyrosine 448. Cystine bridges form between cysteine 420–cysteine 692, cysteine 435–cysteine 655, cysteine 472–cysteine 543, cysteine 496–cysteine 683, cysteine 506–cysteine 520, cysteine 517–cysteine 526, cysteine 583–cysteine 597, and cysteine 633–cysteine 638. Residues threonine 474, arginine 478, alanine 480, and glycine 481 each contribute to the hydrogencarbonate site. N-linked (GlcNAc...) asparagine glycosylation occurs at asparagine 513. Fe(3+) is bound at residue tyrosine 537. Histidine 605 is a Fe(3+) binding site. Serine 684 bears the Phosphoserine mark.

Belongs to the transferrin family. As to quaternary structure, monomer. Part of a complex composed of SLC40A1/ferroportin, TF/transferrin and HEPH/hephaestin that transfers iron from cells to transferrin. Expressed by the liver and secreted in plasma.

It is found in the secreted. Functionally, transferrins are iron binding transport proteins which can bind two Fe(3+) ions in association with the binding of an anion, usually bicarbonate. It is responsible for the transport of iron from sites of absorption and heme degradation to those of storage and utilization. Serum transferrin may also have a further role in stimulating cell proliferation. The sequence is that of Serotransferrin (Tf) from Mus musculus (Mouse).